The chain runs to 124 residues: Large ribosomal subunit protein bL19 (124 aa).

It belongs to the bacterial ribosomal protein bL19 family.

In terms of biological role, this protein is located at the 30S-50S ribosomal subunit interface and may play a role in the structure and function of the aminoacyl-tRNA binding site. The chain is Large ribosomal subunit protein bL19 from Dinoroseobacter shibae (strain DSM 16493 / NCIMB 14021 / DFL 12).